The sequence spans 347 residues: Very-long-chain 3-oxoacyl-CoA reductase (347 aa).

The chain crosses the membrane as a helical span at residues 20–40 (LLWVVFGLGVLKCTTLSLRFL). 7 residues coordinate NADP(+): Val66, Asp120, Asn147, Tyr223, Lys227, Val256, and Ser258. The Proton donor role is filled by Tyr223. Lys227 acts as the Lowers pKa of active site Tyr in catalysis.

The protein belongs to the short-chain dehydrogenases/reductases (SDR) family. In terms of assembly, interacts with the fatty acid elongation system components ELO3 and TSC13.

The protein localises to the endoplasmic reticulum membrane. It catalyses the reaction a very-long-chain (3R)-3-hydroxyacyl-CoA + NADP(+) = a very-long-chain 3-oxoacyl-CoA + NADPH + H(+). Its pathway is lipid metabolism; fatty acid biosynthesis. Component of the microsomal membrane bound fatty acid elongation system, which produces the 26-carbon very long-chain fatty acids (VLCFA) from palmitate. Catalyzes the reduction of the 3-ketoacyl-CoA intermediate that is formed in each cycle of fatty acid elongation. VLCFAs serve as precursors for ceramide and sphingolipids. The polypeptide is Very-long-chain 3-oxoacyl-CoA reductase (Saccharomyces cerevisiae (strain RM11-1a) (Baker's yeast)).